Here is a 378-residue protein sequence, read N- to C-terminus: tRNA (guanine(26)-N(2))-dimethyltransferase (378 aa).

Residues 4–374 (KEVTEGKVRI…KGYEEIIRCV (371 aa)) enclose the Trm1 methyltransferase domain. S-adenosyl-L-methionine is bound by residues arginine 44, arginine 69, aspartate 87, aspartate 114, and alanine 115. Zn(2+)-binding residues include cysteine 246, cysteine 249, cysteine 263, and cysteine 266.

This sequence belongs to the class I-like SAM-binding methyltransferase superfamily. Trm1 family.

The enzyme catalyses guanosine(26) in tRNA + 2 S-adenosyl-L-methionine = N(2)-dimethylguanosine(26) in tRNA + 2 S-adenosyl-L-homocysteine + 2 H(+). Its function is as follows. Dimethylates a single guanine residue at position 26 of a number of tRNAs using S-adenosyl-L-methionine as donor of the methyl groups. This chain is tRNA (guanine(26)-N(2))-dimethyltransferase, found in Saccharolobus islandicus (strain L.S.2.15 / Lassen #1) (Sulfolobus islandicus).